Reading from the N-terminus, the 428-residue chain is Probable pectin lyase F (428 aa).

A signal peptide spans methionine 1–alanine 20. Residues cysteine 83 and cysteine 107 are joined by a disulfide bond. Arginine 257 is a catalytic residue. The N-linked (GlcNAc...) asparagine glycan is linked to asparagine 276. The cysteines at positions 324 and 332 are disulfide-linked. 2 disordered regions span residues leucine 337–aspartate 367 and glycine 383–tyrosine 428. The segment covering alanine 389 to tyrosine 417 has biased composition (low complexity). Positions alanine 418–tyrosine 428 are enriched in basic residues.

Belongs to the polysaccharide lyase 1 family.

It localises to the secreted. It carries out the reaction Eliminative cleavage of (1-&gt;4)-alpha-D-galacturonan methyl ester to give oligosaccharides with 4-deoxy-6-O-methyl-alpha-D-galact-4-enuronosyl groups at their non-reducing ends.. Functionally, pectinolytic enzymes consist of four classes of enzymes: pectin lyase, polygalacturonase, pectin methylesterase and rhamnogalacturonase. Among pectinolytic enzymes, pectin lyase is the most important in depolymerization of pectin, since it cleaves internal glycosidic bonds of highly methylated pectins. The chain is Probable pectin lyase F (pelF) from Aspergillus flavus (strain ATCC 200026 / FGSC A1120 / IAM 13836 / NRRL 3357 / JCM 12722 / SRRC 167).